Reading from the N-terminus, the 187-residue chain is Ribosome maturation factor RimM (187 aa).

Residues 95–178 (DEDEFFYADL…GLVEDKDESL (84 aa)) enclose the PRC barrel domain.

It belongs to the RimM family. As to quaternary structure, binds ribosomal protein uS19.

It localises to the cytoplasm. An accessory protein needed during the final step in the assembly of 30S ribosomal subunit, possibly for assembly of the head region. Essential for efficient processing of 16S rRNA. May be needed both before and after RbfA during the maturation of 16S rRNA. It has affinity for free ribosomal 30S subunits but not for 70S ribosomes. This Sinorhizobium fredii (strain NBRC 101917 / NGR234) protein is Ribosome maturation factor RimM.